A 246-amino-acid polypeptide reads, in one-letter code: 2-C-methyl-D-erythritol 4-phosphate cytidylyltransferase (246 aa).

Belongs to the IspD/TarI cytidylyltransferase family. IspD subfamily.

The catalysed reaction is 2-C-methyl-D-erythritol 4-phosphate + CTP + H(+) = 4-CDP-2-C-methyl-D-erythritol + diphosphate. It functions in the pathway isoprenoid biosynthesis; isopentenyl diphosphate biosynthesis via DXP pathway; isopentenyl diphosphate from 1-deoxy-D-xylulose 5-phosphate: step 2/6. In terms of biological role, catalyzes the formation of 4-diphosphocytidyl-2-C-methyl-D-erythritol from CTP and 2-C-methyl-D-erythritol 4-phosphate (MEP). This chain is 2-C-methyl-D-erythritol 4-phosphate cytidylyltransferase, found in Chlorobaculum tepidum (strain ATCC 49652 / DSM 12025 / NBRC 103806 / TLS) (Chlorobium tepidum).